A 480-amino-acid chain; its full sequence is Iron-sulfur cluster assembly SufBD family protein slr0074 (480 aa).

It belongs to the iron-sulfur cluster assembly SufBD family.

The sequence is that of Iron-sulfur cluster assembly SufBD family protein slr0074 from Synechocystis sp. (strain ATCC 27184 / PCC 6803 / Kazusa).